We begin with the raw amino-acid sequence, 579 residues long: F-box protein At5g39450 (579 aa).

An F-box domain is found at 16 to 62; that stretch reads TCLLLSLPEDVIAVIARFVSPRDICNLSLCCKSLCDVVDSERIWLVQ.

The chain is F-box protein At5g39450 from Arabidopsis thaliana (Mouse-ear cress).